The following is a 634-amino-acid chain: Chaperone protein DnaK (634 aa).

T193 bears the Phosphothreonine; by autocatalysis mark. The interval 597-634 is disordered; that stretch reads GNANNTSSTESTTTNNNNEEDSKVVDSDYQEIDKKDGK. The span at 600–613 shows a compositional bias: low complexity; that stretch reads NNTSSTESTTTNNN. Residues 616–634 are compositionally biased toward basic and acidic residues; the sequence is EDSKVVDSDYQEIDKKDGK.

The protein belongs to the heat shock protein 70 family.

In terms of biological role, acts as a chaperone. The protein is Chaperone protein DnaK of Ehrlichia canis (strain Jake).